Here is a 161-residue protein sequence, read N- to C-terminus: Globin CTT-VIIB-4 (161 aa).

Positions 1–16 are cleaved as a signal peptide; the sequence is MKFFAVLALCIVGAIA. The Globin domain occupies 18–161; sequence PLTADEASLV…NTMAVAVAHL (144 aa). Heme b contacts are provided by histidine 76 and histidine 111.

It belongs to the globin family. In terms of assembly, homodimer.

The polypeptide is Globin CTT-VIIB-4 (CTT-7B4) (Chironomus thummi thummi (Midge)).